Reading from the N-terminus, the 327-residue chain is DNA-directed RNA polymerase subunit alpha (327 aa).

Residues 1–231 (MIYQMQMPAK…DHVLLFADFS (231 aa)) form an alpha N-terminal domain (alpha-NTD) region. The tract at residues 247–327 (DEFETMRRLL…GMDITRYQMK (81 aa)) is alpha C-terminal domain (alpha-CTD).

This sequence belongs to the RNA polymerase alpha chain family. As to quaternary structure, homodimer. The RNAP catalytic core consists of 2 alpha, 1 beta, 1 beta' and 1 omega subunit. When a sigma factor is associated with the core the holoenzyme is formed, which can initiate transcription.

The enzyme catalyses RNA(n) + a ribonucleoside 5'-triphosphate = RNA(n+1) + diphosphate. In terms of biological role, DNA-dependent RNA polymerase catalyzes the transcription of DNA into RNA using the four ribonucleoside triphosphates as substrates. The chain is DNA-directed RNA polymerase subunit alpha from Chlorobium chlorochromatii (strain CaD3).